We begin with the raw amino-acid sequence, 348 residues long: tRNA pseudouridine synthase D (348 aa).

Phe-27 serves as a coordination point for substrate. The Nucleophile role is filled by Asp-80. Asn-129 is a substrate binding site. The TRUD domain maps to 155-303 (GVPNYFGSQR…VEPARRAVLL (149 aa)). Residue Phe-329 participates in substrate binding.

It belongs to the pseudouridine synthase TruD family.

The enzyme catalyses uridine(13) in tRNA = pseudouridine(13) in tRNA. In terms of biological role, responsible for synthesis of pseudouridine from uracil-13 in transfer RNAs. The chain is tRNA pseudouridine synthase D from Pectobacterium atrosepticum (strain SCRI 1043 / ATCC BAA-672) (Erwinia carotovora subsp. atroseptica).